Here is a 343-residue protein sequence, read N- to C-terminus: Protein SOSEKI 4 (343 aa).

Residues 18–109 (RIVPVVYYLS…YVLKGSQILD (92 aa)) form a DIX-like oligomerization domain region. The segment at 148–194 (RKLSMDASTQTDDRRRRKSPVDEVNEVTELSREEITSPPQSDSSPET) is disordered. Polar residues predominate over residues 184–194 (SPPQSDSSPET). An Association to cell membranes motif is present at residues 233 to 234 (CG).

Belongs to the SOSEKI family. As to quaternary structure, homodimer. Forms long polymer filaments with other SOKs proteins polymers (e.g. SOK1, SOK2, SOK3 and SOK4) crucial for polar localization and biological activity. Binds to ANGUSTIFOLIA (AN). As to expression, expressed during embryogenesis and in roots.

The protein localises to the cell membrane. Functionally, SOSEKI proteins (SOK1-5) locally interpret global polarity cues and can influence cell division orientation to coordinate cell polarization relative to body axes, probably by guiding ANGUSTIFOLIA (AN) polarized localization. Positive regulator of auxin (indole-3-acetic acid, IAA) biosynthesis and signaling pathway leading to the modulation of seedling growth, plant and inflorescence development. Negative regulator of stress responses (e.g. salinity and osmotic stress). This is Protein SOSEKI 4 from Arabidopsis thaliana (Mouse-ear cress).